Consider the following 189-residue polypeptide: Probable nicotinate-nucleotide adenylyltransferase (189 aa).

This sequence belongs to the NadD family.

The enzyme catalyses nicotinate beta-D-ribonucleotide + ATP + H(+) = deamido-NAD(+) + diphosphate. It functions in the pathway cofactor biosynthesis; NAD(+) biosynthesis; deamido-NAD(+) from nicotinate D-ribonucleotide: step 1/1. Its function is as follows. Catalyzes the reversible adenylation of nicotinate mononucleotide (NaMN) to nicotinic acid adenine dinucleotide (NaAD). The chain is Probable nicotinate-nucleotide adenylyltransferase from Bacillus cereus (strain AH187).